Here is a 421-residue protein sequence, read N- to C-terminus: Acyl-coenzyme A thioesterase 5 (421 aa).

Active-site charge relay system residues include S232, D326, and H360. A Microbody targeting signal motif is present at residues 419–421 (AKL).

Belongs to the C/M/P thioester hydrolase family. As to expression, highly expressed in spleen, brain, testis and proximal and distal intestine; expressed at low level in the liver.

It is found in the peroxisome. The enzyme catalyses hexadecanoyl-CoA + H2O = hexadecanoate + CoA + H(+). The catalysed reaction is decanoyl-CoA + H2O = decanoate + CoA + H(+). It catalyses the reaction octanoyl-CoA + H2O = octanoate + CoA + H(+). It carries out the reaction dodecanoyl-CoA + H2O = dodecanoate + CoA + H(+). The enzyme catalyses tetradecanoyl-CoA + H2O = tetradecanoate + CoA + H(+). The catalysed reaction is octadecanoyl-CoA + H2O = octadecanoate + CoA + H(+). It catalyses the reaction eicosanoyl-CoA + H2O = eicosanoate + CoA + H(+). It carries out the reaction (9Z)-octadecenoyl-CoA + H2O = (9Z)-octadecenoate + CoA + H(+). The enzyme catalyses (9Z,12Z)-octadecadienoyl-CoA + H2O = (9Z,12Z)-octadecadienoate + CoA + H(+). The catalysed reaction is (5Z,8Z,11Z,14Z)-eicosatetraenoyl-CoA + H2O = (5Z,8Z,11Z,14Z)-eicosatetraenoate + CoA + H(+). It catalyses the reaction (9Z)-hexadecenoyl-CoA + H2O = (9Z)-hexadecenoate + CoA + H(+). The protein operates within lipid metabolism; fatty acid metabolism. In terms of biological role, catalyzes the hydrolysis of acyl-CoAs into free fatty acids and coenzyme A (CoASH), regulating their respective intracellular levels. Mainly active on medium-chain acyl-CoAs. Seems to be involved in intraperoxisomal regulation of acyl-CoA levels, but not CoASH levels. May have a function in termination of beta-oxidation of fatty acids. This Mus musculus (Mouse) protein is Acyl-coenzyme A thioesterase 5 (Acot5).